A 1063-amino-acid chain; its full sequence is MLLCIVLFLIFHILINQAGIVHVLYNASFVASSSRFILFCEELFKATPQYWQWGNSIVQNGDASIASTLYLTMRTFIKHWKYTLLIMINQSISYSCYSTNEASHLLFTNLPKVAPYTLGPLNFECCLLSSHHIRHIVLMFYGANIDHGLTKYELYTVCRPSSDEKLCNKILNSPRLHTHNRYLYLTEVRIVGAFYLIKQVGARMVGLLVHLAFMVLQNLPKLIWPLDLVHVRQKGTCTAHIAYHPLAQKHFPPYFTHFYLNVTIYAVVKNILDNISSSFTLQSNRVRPRPDVAGFDFFHRFDAFEQSLTYGGDTGITSSNEKVALCFEATYTDIFFTVEIIDSTSVDSGAIMLPILVDAYTAVARNFCSVSMVISPLVTLVVYDIYTCSFIGLCTQRRTINCTRILDAISSVGNSHTFLPRYKSPRELTTRQPSGSSVILLIFLLLGFEFFLFSGLVVVEPVNDVGDLVVNDLLVAFIDLALELFVVEGVAEVVGVVFKTVLGFNADVVGFIFRLVLFSFLHHAFNIILGEATLVVGNGNLVFFTSRLFDGRHVQDTVGINVEGDINLWNTTRHWRNTIEGELPEQVVVTGHRTLTFKHLNQHTRLVVSVGGESLRLLGWHSSVTLDEGSHDTTSSFQTKRERSDIKKQQVLELFRRVVTAQNGSLDCGTESNSFIRVDRLAWFLAVEEVRKQLLDLWDTGGTTDKDDFMDLALGELRVTEDLFNRFHSLAEVVTAHVFETGTGDGGVEINTIEERVDFNVSLGRRRKSTLGTFTSGTKTAKGTLVLGHILAVLALEFSGKVVDEAVIEIFTTQVGITSSSLDFEDTFFNGQKRHIEGTTTKIENENIAFTTLLVKTVGNGGTSRFVNDTKDVKTSNGTSILGSLTLRVVEISWDGNDSVVNSSTNEGFSNFLHLDQNHRGNFFRLESLSFTLEFDGDLWLVTSTRGNLEWPVLNIGLSSWVVEFTTDQTLSIEHSVGRVHGNLVLSGITNKTFAVSESNVRWGGTVTLIVGNNFNTIVLPDTDTRISRTEIDTDGSSLDTRHACSKFKNEVDSPPHLTSAFI.

It belongs to the Glu/Leu/Phe/Val dehydrogenases family. Highly divergent. As to quaternary structure, homotetramer.

The enzyme catalyses L-glutamate + NAD(+) + H2O = 2-oxoglutarate + NH4(+) + NADH + H(+). With respect to regulation, allosterically activated by NADP(+). The sequence is that of NAD-specific glutamate dehydrogenase from Achlya klebsiana.